The primary structure comprises 270 residues: tRNA 2-(methylsulfanyl)-N(6)-isopentenyladenosine(37) hydroxylase (270 aa).

Fe cation-binding residues include Glu-59, Glu-137, His-140, Glu-190, Glu-219, and His-222.

The protein belongs to the MiaE family. In terms of assembly, monomer. The cofactor is Fe cation.

It carries out the reaction 2-methylsulfanyl-N(6)-dimethylallyladenosine(37) in tRNA + AH2 + O2 = N(6)-[(2E)-4-hydroxy-3-methylbut-2-en-1-yl]-2-(methylsulfanyl)adenosine(37) in tRNA + A + H2O. It participates in tRNA modification; 2-methylthio-N-6-(cis-hydroxy)isopentenyl adenosine-tRNA biosynthesis. Its function is as follows. Involved in specific tRNA modification. Catalyzes the oxygen-dependent hydroxylation of 2-methylthio-N-6-isopentenyl adenosine (ms2i6A) to produce 2-methylthio-N-6-(cis-hydroxy)isopentenyl adenosine (ms2io6A) at position 37 in tRNAs. Can also use N6-(dimethylallyl)adenosine (i6A) as substrate, with lower efficiency. The presence of the hydroxyl group on the tRNA may regulate the ability of S.typhimurium to grow on the citric acid cycle (CAC) intermediates succinate, fumarate and malate. In Salmonella typhimurium (strain LT2 / SGSC1412 / ATCC 700720), this protein is tRNA 2-(methylsulfanyl)-N(6)-isopentenyladenosine(37) hydroxylase.